The primary structure comprises 188 residues: F7-2 fimbrial protein (188 aa).

The signal sequence occupies residues 1 to 21; it reads MIKSVIAGAVAMAVVSFGAYA. A disulfide bridge connects residues Cys43 and Cys82.

Belongs to the fimbrial protein family.

It is found in the fimbrium. Its function is as follows. Fimbriae (also called pili), polar filaments radiating from the surface of the bacterium to a length of 0.5-1.5 micrometers and numbering 100-300 per cell, enable bacteria to colonize the epithelium of specific host organs. This chain is F7-2 fimbrial protein (F7-2), found in Escherichia coli O6:H1 (strain CFT073 / ATCC 700928 / UPEC).